The chain runs to 363 residues: Type-1 angiotensin II receptor B (363 aa).

Residues 1–27 lie on the Extracellular side of the membrane; the sequence is MLSNISAGENSEVEKIVVKCSKSGMHN. N-linked (GlcNAc...) asparagine glycosylation occurs at Asn-4. 2 cysteine pairs are disulfide-bonded: Cys-20–Cys-274 and Cys-103–Cys-182. The helical transmembrane segment at 28 to 57 threads the bilayer; that stretch reads YIFITIPIIYSTIFVVGVFGNSLVVIVIYS. Residues 58 to 63 lie on the Cytoplasmic side of the membrane; the sequence is YMKMKT. A helical membrane pass occupies residues 64 to 91; the sequence is MASVFLMNLALSDLCFVITLPLWAVYTA. Topologically, residues 92 to 100 are extracellular; sequence MHYHWPFGD. A helical membrane pass occupies residues 101-127; sequence LLCKIASTAITLNLYTTVFLLTCLSID. Topologically, residues 128-143 are cytoplasmic; sequence RYSAIVHPMKSRIRRT. A helical transmembrane segment spans residues 144–167; that stretch reads VMVARLTCVGIWLVAFLASLPSVI. At 168 to 192 the chain is on the extracellular side; the sequence is YRQIFIFPDTNQTVCALVYHSGHIY. Arg-169 contacts angiotensin II. N-linked (GlcNAc...) asparagine glycosylation is present at Asn-178. 2 residues coordinate angiotensin II: Tyr-186 and Lys-201. The chain crosses the membrane as a helical span at residues 193–218; sequence FMVGMSLVKNIVGFFIPFVIILTSYT. Residues 219–239 are Cytoplasmic-facing; the sequence is LIGKTLKEVYRAQRARNDDIF. The chain crosses the membrane as a helical span at residues 240-268; sequence KMIVAVVLLFFFCWIPHQVFTFLDVLIQM. At 269-278 the chain is on the extracellular side; sequence DVIQNCKMYD. The chain crosses the membrane as a helical span at residues 279–304; it reads IVDTGMPITICIAYFNSCLNPFLYGF. Residues 305-363 are Cytoplasmic-facing; the sequence is FGKKFRKHFLQLIKYIPPKMRTHASVNTKSSTVSQRLSDTKCASNKIALWIFDIEEHCK. 2 S-palmitoyl cysteine lipidation sites follow: Cys-346 and Cys-362.

It belongs to the G-protein coupled receptor 1 family. Post-translationally, C-terminal Ser or Thr residues may be phosphorylated. In terms of tissue distribution, heart membranes, follicular oocytes.

The protein resides in the cell membrane. Its function is as follows. Receptor for angiotensin II, a vasoconstricting peptide, which acts as a key regulator of blood pressure and sodium retention by the kidney. The activated receptor in turn couples to G-alpha proteins G(q) (GNAQ, GNA11, GNA14 or GNA15) and thus activates phospholipase C and increases the cytosolic Ca(2+) concentrations, which in turn triggers cellular responses such as stimulation of protein kinase C. The polypeptide is Type-1 angiotensin II receptor B (agtr1-b) (Xenopus laevis (African clawed frog)).